A 179-amino-acid polypeptide reads, in one-letter code: ATP-dependent protease subunit HslV (179 aa).

T9 is an active-site residue. Residues A164, C167, and T170 each coordinate Na(+).

The protein belongs to the peptidase T1B family. HslV subfamily. In terms of assembly, a double ring-shaped homohexamer of HslV is capped on each side by a ring-shaped HslU homohexamer. The assembly of the HslU/HslV complex is dependent on binding of ATP.

It is found in the cytoplasm. It carries out the reaction ATP-dependent cleavage of peptide bonds with broad specificity.. Allosterically activated by HslU binding. Protease subunit of a proteasome-like degradation complex believed to be a general protein degrading machinery. The polypeptide is ATP-dependent protease subunit HslV (Syntrophobacter fumaroxidans (strain DSM 10017 / MPOB)).